Here is a 417-residue protein sequence, read N- to C-terminus: Serine hydroxymethyltransferase (417 aa).

Residues leucine 122 and 126 to 128 each bind (6S)-5,6,7,8-tetrahydrofolate; that span reads GHL. Lysine 230 is modified (N6-(pyridoxal phosphate)lysine). 355–357 contributes to the (6S)-5,6,7,8-tetrahydrofolate binding site; that stretch reads SPF.

Belongs to the SHMT family. In terms of assembly, homodimer. The cofactor is pyridoxal 5'-phosphate.

The protein resides in the cytoplasm. It catalyses the reaction (6R)-5,10-methylene-5,6,7,8-tetrahydrofolate + glycine + H2O = (6S)-5,6,7,8-tetrahydrofolate + L-serine. Its pathway is one-carbon metabolism; tetrahydrofolate interconversion. It participates in amino-acid biosynthesis; glycine biosynthesis; glycine from L-serine: step 1/1. Catalyzes the reversible interconversion of serine and glycine with tetrahydrofolate (THF) serving as the one-carbon carrier. This reaction serves as the major source of one-carbon groups required for the biosynthesis of purines, thymidylate, methionine, and other important biomolecules. Also exhibits THF-independent aldolase activity toward beta-hydroxyamino acids, producing glycine and aldehydes, via a retro-aldol mechanism. The polypeptide is Serine hydroxymethyltransferase (Francisella tularensis subsp. mediasiatica (strain FSC147)).